Reading from the N-terminus, the 245-residue chain is Protein crossbronx (245 aa).

The UBC core domain maps to H20–A177.

The protein belongs to the ubiquitin-conjugating enzyme family. FTS subfamily.

This chain is Protein crossbronx (cbx), found in Drosophila mojavensis (Fruit fly).